The chain runs to 149 residues: D-aminoacyl-tRNA deacylase (149 aa).

The Gly-cisPro motif, important for rejection of L-amino acids signature appears at 137 to 138 (GP).

Belongs to the DTD family. Homodimer.

It is found in the cytoplasm. It carries out the reaction glycyl-tRNA(Ala) + H2O = tRNA(Ala) + glycine + H(+). It catalyses the reaction a D-aminoacyl-tRNA + H2O = a tRNA + a D-alpha-amino acid + H(+). In terms of biological role, an aminoacyl-tRNA editing enzyme that deacylates mischarged D-aminoacyl-tRNAs. Also deacylates mischarged glycyl-tRNA(Ala), protecting cells against glycine mischarging by AlaRS. Acts via tRNA-based rather than protein-based catalysis; rejects L-amino acids rather than detecting D-amino acids in the active site. By recycling D-aminoacyl-tRNA to D-amino acids and free tRNA molecules, this enzyme counteracts the toxicity associated with the formation of D-aminoacyl-tRNA entities in vivo and helps enforce protein L-homochirality. This Clostridium novyi (strain NT) protein is D-aminoacyl-tRNA deacylase.